Reading from the N-terminus, the 509-residue chain is ATP synthase subunit alpha (509 aa).

169–176 is a binding site for ATP; the sequence is GDRQTGKT.

It belongs to the ATPase alpha/beta chains family. In terms of assembly, F-type ATPases have 2 components, CF(1) - the catalytic core - and CF(0) - the membrane proton channel. CF(1) has five subunits: alpha(3), beta(3), gamma(1), delta(1), epsilon(1). CF(0) has three main subunits: a(1), b(2) and c(9-12). The alpha and beta chains form an alternating ring which encloses part of the gamma chain. CF(1) is attached to CF(0) by a central stalk formed by the gamma and epsilon chains, while a peripheral stalk is formed by the delta and b chains.

Its subcellular location is the cell inner membrane. It carries out the reaction ATP + H2O + 4 H(+)(in) = ADP + phosphate + 5 H(+)(out). Produces ATP from ADP in the presence of a proton gradient across the membrane. The alpha chain is a regulatory subunit. The chain is ATP synthase subunit alpha from Xanthobacter autotrophicus (strain ATCC BAA-1158 / Py2).